A 141-amino-acid chain; its full sequence is Large ribosomal subunit protein uL11 (141 aa).

This sequence belongs to the universal ribosomal protein uL11 family. Part of the ribosomal stalk of the 50S ribosomal subunit. Interacts with L10 and the large rRNA to form the base of the stalk. L10 forms an elongated spine to which L12 dimers bind in a sequential fashion forming a multimeric L10(L12)X complex. In terms of processing, one or more lysine residues are methylated.

Functionally, forms part of the ribosomal stalk which helps the ribosome interact with GTP-bound translation factors. In Geobacillus thermodenitrificans (strain NG80-2), this protein is Large ribosomal subunit protein uL11.